Here is a 149-residue protein sequence, read N- to C-terminus: Calmodulin (149 aa).

Ala2 carries the post-translational modification N-acetylalanine. 4 consecutive EF-hand domains span residues 8–43 (EQIAEFKEAFSLFDKDGDGTITTKELGTVMRSLGQN), 44–79 (PTEAELQDMINEVDADGNGTIDFPEFLTMMARKMKD), 81–116 (DSEEEIREAFRVFDKDGNGYISAAELRHVMTNLGEK), and 117–149 (LTDEEVDEMIREADIDGDGQVNYEEFVQIMTAK). Asp21, Asp23, Asp25, Thr27, Glu32, Asp57, Asp59, Asn61, Thr63, Glu68, Asp94, Asp96, Asn98, Tyr100, and Glu105 together coordinate Ca(2+). The residue at position 116 (Lys116) is an N6,N6,N6-trimethyllysine. 5 residues coordinate Ca(2+): Asp130, Asp132, Asp134, Gln136, and Glu141.

The protein belongs to the calmodulin family.

In terms of biological role, calmodulin acts as part of a calcium signal transduction pathway by mediating the control of a large number of enzymes, ion channels, aquaporins and other proteins through calcium-binding. Calcium-binding is required for the activation of calmodulin. Among the enzymes to be stimulated by the calmodulin-calcium complex are a number of protein kinases, such as myosin light-chain kinases and calmodulin-dependent protein kinase type II (CaMK2), and phosphatases. The polypeptide is Calmodulin (calm) (Epinephelus akaara (Hong Kong grouper)).